The following is a 178-amino-acid chain: Cytidylate kinase 2 (178 aa).

7-15 (GKSGCGNTT) is an ATP binding site.

Belongs to the cytidylate kinase family. Type 2 subfamily.

Its subcellular location is the cytoplasm. The enzyme catalyses CMP + ATP = CDP + ADP. The catalysed reaction is dCMP + ATP = dCDP + ADP. This Borreliella afzelii (strain PKo) (Borrelia afzelii) protein is Cytidylate kinase 2.